The primary structure comprises 174 residues: Adenylate kinase (174 aa).

The interval 12–41 is NMP; the sequence is STGDMLRAAIKAGTLLGLEAKKIIDEGGLV. Residues Thr13, Arg18, 39-41, 67-70, and Gln74 each bind AMP; these read GLV and GFPR. The interval 104 to 141 is LID; sequence GRRVHLASGRTYHVTYNPPKVEGKDDVTGEDLIQRDDD. ATP-binding positions include Arg105 and 114 to 115; that span reads TY. Positions 138 and 149 each coordinate AMP.

The protein belongs to the adenylate kinase family. In terms of assembly, monomer.

It is found in the cytoplasm. It catalyses the reaction AMP + ATP = 2 ADP. Its pathway is purine metabolism; AMP biosynthesis via salvage pathway; AMP from ADP: step 1/1. Catalyzes the reversible transfer of the terminal phosphate group between ATP and AMP. Plays an important role in cellular energy homeostasis and in adenine nucleotide metabolism. The polypeptide is Adenylate kinase (Neisseria polysaccharea).